A 285-amino-acid chain; its full sequence is 2-dehydro-3-deoxyphosphooctonate aldolase (285 aa).

It belongs to the KdsA family.

Its subcellular location is the cytoplasm. The enzyme catalyses D-arabinose 5-phosphate + phosphoenolpyruvate + H2O = 3-deoxy-alpha-D-manno-2-octulosonate-8-phosphate + phosphate. The protein operates within carbohydrate biosynthesis; 3-deoxy-D-manno-octulosonate biosynthesis; 3-deoxy-D-manno-octulosonate from D-ribulose 5-phosphate: step 2/3. It participates in bacterial outer membrane biogenesis; lipopolysaccharide biosynthesis. This chain is 2-dehydro-3-deoxyphosphooctonate aldolase, found in Bordetella bronchiseptica (strain ATCC BAA-588 / NCTC 13252 / RB50) (Alcaligenes bronchisepticus).